The chain runs to 123 residues: MFEITGINVSGALKAVVMATGFENPLSSVNEIETKLSALLGSETTGEILFDLLCANGPEWNRFVTLEMKYGRIMLDTAKIIDEQDVPTHILSKLTFTLRNHPEYLEASVLSPDDVRQVLSMDF.

As to quaternary structure, can form a complex with cognate toxin RnlA. Post-translationally, probably degraded by CplXP and Lon proteases.

In terms of biological role, antitoxin component of a type II toxin-antitoxin (TA) system. A labile antitoxin (half-life of 2.1 minutes) that inhibits the endonuclease activity of cognate toxin RnlA but not that of non-cognate toxin LsoA. This chain is Antitoxin RnlB (rnlB), found in Escherichia coli (strain K12).